A 68-amino-acid chain; its full sequence is Conotoxin TsMMSK-021 (68 aa).

Positions 1-20 (MMSKLGVLLTICLLLFPLTA) are cleaved as a signal peptide. The propeptide occupies 21 to 50 (VPLDGDQHADRPADRMQDISSEQHPLFDPV). 3 disulfide bridges follow: C53–C66, C54–C62, and C58–C65. At P64 the chain carries 4-hydroxyproline.

Belongs to the conotoxin M superfamily. In terms of tissue distribution, expressed by the venom duct.

The protein localises to the secreted. This chain is Conotoxin TsMMSK-021, found in Conus tessulatus (Tessellate cone).